The primary structure comprises 341 residues: UDP-N-acetylenolpyruvoylglucosamine reductase (341 aa).

The 171-residue stretch at 15 to 185 folds into the FAD-binding PCMH-type domain; the sequence is VEQSCLSLIE…TAVGLRLPKA (171 aa). Residue Arg-161 is part of the active site. Ser-231 serves as the catalytic Proton donor. Glu-327 is an active-site residue.

The protein belongs to the MurB family. The cofactor is FAD.

It localises to the cytoplasm. It catalyses the reaction UDP-N-acetyl-alpha-D-muramate + NADP(+) = UDP-N-acetyl-3-O-(1-carboxyvinyl)-alpha-D-glucosamine + NADPH + H(+). It participates in cell wall biogenesis; peptidoglycan biosynthesis. Cell wall formation. This chain is UDP-N-acetylenolpyruvoylglucosamine reductase, found in Shewanella sp. (strain ANA-3).